The chain runs to 401 residues: Multidrug resistance protein MdtH (401 aa).

Over 1–12 the chain is Cytoplasmic; the sequence is MSRVSQARNLGK. A helical transmembrane segment spans residues 13-33; that stretch reads YFLLIDNMLVVLGFFVVFPLV. The Periplasmic portion of the chain corresponds to 34–98; the sequence is SIRFVDQMGW…GFATMGIAHE (65 aa). Residues 99–116 traverse the membrane as a helical segment; the sequence is PWLLWFSCLLSGLGGTLF. Residues 117–137 are Cytoplasmic-facing; it reads DPPRSALVVKLMPQQRGRFFS. A helical membrane pass occupies residues 138–158; sequence LLMMQDSAGAVIGALLGSWLL. Over 159–163 the chain is Periplasmic; it reads QYDFR. The chain crosses the membrane as a helical span at residues 164 to 184; that stretch reads LVCATGAVLFVLCAAFNAWLL. Over 185–212 the chain is Cytoplasmic; it reads PAWKLSTIRTPVREGMTRVMRDKRFVTY. A helical membrane pass occupies residues 213 to 233; that stretch reads VLTLAGYYMLAVQVMLMLPIM. Residues 234–242 lie on the Periplasmic side of the membrane; it reads VNDVAGAPS. A helical transmembrane segment spans residues 243–263; the sequence is AVKWMYAIEACLSLTLLYPIA. Residues 264 to 275 are Cytoplasmic-facing; sequence RWSEKHFRLEHR. The helical transmembrane segment at 276–296 threads the bilayer; the sequence is LMAGLLIMSLSMMPVGMVSGL. Residues 297 to 298 lie on the Periplasmic side of the membrane; the sequence is QQ. A helical membrane pass occupies residues 299–319; the sequence is LFTLICLFYIGSIIAEPARET. Over 320–338 the chain is Cytoplasmic; it reads LSASLADARARGSYMGFSR. A helical membrane pass occupies residues 339-359; the sequence is LGLAIGGTIGYIGGGWLFDLG. The Periplasmic portion of the chain corresponds to 360–366; the sequence is KSAHQPE. A helical transmembrane segment spans residues 367-387; sequence LPWMMLGIIGIFTFLALGWQF. Residues 388–401 lie on the Cytoplasmic side of the membrane; it reads SQKRAARRLLERDA.

It belongs to the major facilitator superfamily. DHA1 family. MdtH (TC 2.A.1.2.21) subfamily.

Its subcellular location is the cell inner membrane. The chain is Multidrug resistance protein MdtH from Shigella dysenteriae serotype 1 (strain Sd197).